A 115-amino-acid polypeptide reads, in one-letter code: NADH-ubiquinone oxidoreductase chain 3 (115 aa).

The next 3 helical transmembrane spans lie at 4-24, 55-75, and 84-104; these read ILTL…AFWL, FFLV…LLPL, and SYLT…GLAY.

This sequence belongs to the complex I subunit 3 family. In terms of assembly, core subunit of respiratory chain NADH dehydrogenase (Complex I) which is composed of 45 different subunits. Interacts with TMEM186. Interacts with TMEM242.

The protein resides in the mitochondrion inner membrane. It carries out the reaction a ubiquinone + NADH + 5 H(+)(in) = a ubiquinol + NAD(+) + 4 H(+)(out). In terms of biological role, core subunit of the mitochondrial membrane respiratory chain NADH dehydrogenase (Complex I) which catalyzes electron transfer from NADH through the respiratory chain, using ubiquinone as an electron acceptor. Essential for the catalytic activity of complex I. This chain is NADH-ubiquinone oxidoreductase chain 3, found in Necromys lactens (Rufous-bellied bolo mouse).